The following is a 477-amino-acid chain: UDP-N-acetylmuramate--L-alanine ligase (477 aa).

An ATP-binding site is contributed by 125 to 131 (GTHGKTT).

It belongs to the MurCDEF family.

It is found in the cytoplasm. It carries out the reaction UDP-N-acetyl-alpha-D-muramate + L-alanine + ATP = UDP-N-acetyl-alpha-D-muramoyl-L-alanine + ADP + phosphate + H(+). It participates in cell wall biogenesis; peptidoglycan biosynthesis. In terms of biological role, cell wall formation. The protein is UDP-N-acetylmuramate--L-alanine ligase of Acidothermus cellulolyticus (strain ATCC 43068 / DSM 8971 / 11B).